Here is a 680-residue protein sequence, read N- to C-terminus: WD repeat-containing protein 48 homolog (680 aa).

8 WD repeats span residues 26-65, 71-110, 113-152, 164-203, 206-245, 248-287, 290-329, and 350-389; these read QHRN…SEKY, HHND…CMST, THRD…ALTA, GSKD…RSMK, GHTE…CVQT, VHKE…NKTL, EEQA…RCTM, and KGGA…KKEQ. Positions 592–616 are disordered; that stretch reads ETTPSGGNANNSLQNSQSDANSEGS.

It belongs to the WD repeat WDR48 family. In terms of assembly, catalytic component of the Usp12-46 deubiquitylase complex consisting of Usp12-46, Wdr20 and Uaf1; regulatory subunit that, together wtih Wdr20, stabilizes Usp12-46. The Usp12-46 deubiquitylase complex associates with arr/arrow; the interaction leads to deubiquitination and stabilization of arr/arrow.

Its function is as follows. Regulatory component of the Usp12-46 deubiquitylase complex. activates deubiquitination by increasing the catalytic turnover without increasing the affinity of deubiquitinating enzymes for the substrate. The complex deubiquitylates the wg/wingless-signaling receptor arr/arrow, which stabilizes the receptor and increases its concentration at the cell surface; this enhances the sensitivity of cells to wg/wingless-signal stimulation. This increases the amplitude and spatial range of the signaling response to the wg/wingless morphogen gradient, facilitating the precise concentration-dependent regulation of its target genes. Together with Wdr20 and Usp12-46 required for wg/wingless-mediated signaling in the wing imaginal disc and for wg/wingless-dependent regulation of intestinal stem cell proliferation. The sequence is that of WD repeat-containing protein 48 homolog from Drosophila yakuba (Fruit fly).